A 247-amino-acid polypeptide reads, in one-letter code: Ribosomal RNA small subunit methyltransferase J (247 aa).

S-adenosyl-L-methionine is bound by residues 101–102 (RD), 117–118 (ER), 153–154 (SS), and Asp171.

The protein belongs to the methyltransferase superfamily. RsmJ family.

Its subcellular location is the cytoplasm. It carries out the reaction guanosine(1516) in 16S rRNA + S-adenosyl-L-methionine = N(2)-methylguanosine(1516) in 16S rRNA + S-adenosyl-L-homocysteine + H(+). Specifically methylates the guanosine in position 1516 of 16S rRNA. The chain is Ribosomal RNA small subunit methyltransferase J from Photorhabdus laumondii subsp. laumondii (strain DSM 15139 / CIP 105565 / TT01) (Photorhabdus luminescens subsp. laumondii).